Here is a 214-residue protein sequence, read N- to C-terminus: Endothelial cell-specific chemotaxis regulator (214 aa).

The N-terminal stretch at 1 to 18 (MRLGSAILGLLLLQGYSS) is a signal peptide. Topologically, residues 19–130 (QPTTTQTSQE…PTPTSESVLT (112 aa)) are extracellular. Residues 23–107 (TQTSQEILQK…DATPSPETTS (85 aa)) are disordered. The span at 28–57 (EILQKSSQVSLVSNQPVTPRSSTMDKQSLS) shows a compositional bias: polar residues. A compositionally biased stretch (low complexity) spans 80–90 (RSSSSSSSSSS). Residues 131–151 (VAAFGVISFIVILVVVVIILV) form a helical membrane-spanning segment. At 152-214 (SVVSLRFKCR…KGSMSAEKIL (63 aa)) the chain is on the cytoplasmic side. A disordered region spans residues 163–184 (NKESEDPQKPGSSGLSESCSTA). Polar residues predominate over residues 172 to 184 (PGSSGLSESCSTA). Phosphoserine is present on residues Ser204 and Ser207.

The protein belongs to the ECSCR family. In terms of assembly, interacts with FLNA. Interacts with the 20S proteasome subunit PSMA7. May be heavily O-glycosylated. In terms of tissue distribution, expressed in all tissues examined, highest expression was observed in lung and spleen endothelial cells.

It is found in the cell membrane. Its subcellular location is the cytoplasm. Regulates endothelial chemotaxis and tube formation. Has a role in angiogenesis and apoptosis via modulation of the actin cytoskeleton and facilitation of proteasomal degradation of the apoptosis inhibitors BIRC3/IAP1 and BIRC2/IAP2. In Mus musculus (Mouse), this protein is Endothelial cell-specific chemotaxis regulator (Ecscr).